A 253-amino-acid chain; its full sequence is Putative cysteine-rich repeat secretory protein 33 (253 aa).

The signal sequence occupies residues Met1 to Ser28. Gnk2-homologous domains follow at residues Glu34–Asp133 and Tyr141–Phe250.

Belongs to the cysteine-rich repeat secretory protein family.

The protein resides in the secreted. The protein is Putative cysteine-rich repeat secretory protein 33 (CRRSP33) of Arabidopsis thaliana (Mouse-ear cress).